Here is a 402-residue protein sequence, read N- to C-terminus: DNA primase DnaG (402 aa).

The Toprim domain maps to 165–243; it reads PNLIIVEGRA…KIDFVARAPV (79 aa). Positions 171, 216, and 218 each coordinate Mg(2+).

It belongs to the archaeal DnaG primase family. In terms of assembly, forms a ternary complex with MCM helicase and DNA. Component of the archaeal exosome complex. Mg(2+) serves as cofactor.

The enzyme catalyses ssDNA + n NTP = ssDNA/pppN(pN)n-1 hybrid + (n-1) diphosphate.. RNA polymerase that catalyzes the synthesis of short RNA molecules used as primers for DNA polymerase during DNA replication. Also part of the exosome, which is a complex involved in RNA degradation. Acts as a poly(A)-binding protein that enhances the interaction between heteromeric, adenine-rich transcripts and the exosome. The chain is DNA primase DnaG from Saccharolobus islandicus (strain Y.N.15.51 / Yellowstone #2) (Sulfolobus islandicus).